Consider the following 132-residue polypeptide: UPF0212 protein PYRAB08340 (132 aa).

It belongs to the UPF0212 family.

This Pyrococcus abyssi (strain GE5 / Orsay) protein is UPF0212 protein PYRAB08340.